A 451-amino-acid polypeptide reads, in one-letter code: Trigger factor (451 aa).

In terms of domain architecture, PPIase FKBP-type spans 173 to 258 (GDRVTLDFVG…LKKIEWAHLP (86 aa)).

It belongs to the FKBP-type PPIase family. Tig subfamily.

It is found in the cytoplasm. It carries out the reaction [protein]-peptidylproline (omega=180) = [protein]-peptidylproline (omega=0). Involved in protein export. Acts as a chaperone by maintaining the newly synthesized protein in an open conformation. Functions as a peptidyl-prolyl cis-trans isomerase. In Cupriavidus pinatubonensis (strain JMP 134 / LMG 1197) (Cupriavidus necator (strain JMP 134)), this protein is Trigger factor.